We begin with the raw amino-acid sequence, 468 residues long: Phosphatidylglycerol--prolipoprotein diacylglyceryl transferase (468 aa).

A run of 3 helical transmembrane segments spans residues 21–41 (LPVR…LLIG), 56–76 (YDIA…YHLA), and 96–116 (IWDG…GAWI). Arg-144 is an a 1,2-diacyl-sn-glycero-3-phospho-(1'-sn-glycerol) binding site. The next 3 helical transmembrane spans lie at 192–212 (VVQP…VALI), 218–238 (FIIG…AGRF), and 256–276 (INSF…ILAP). The tract at residues 349 to 468 (VVQVADRDGE…RWWRLRRRRQ (120 aa)) is disordered. A compositionally biased stretch (low complexity) spans 391 to 406 (AEAASAAPEEPAALAS). Residues 445 to 455 (DGIRRQDDFSS) are compositionally biased toward basic and acidic residues. Basic residues predominate over residues 456–468 (RRRRWWRLRRRRQ).

Belongs to the Lgt family.

It is found in the cell membrane. It carries out the reaction L-cysteinyl-[prolipoprotein] + a 1,2-diacyl-sn-glycero-3-phospho-(1'-sn-glycerol) = an S-1,2-diacyl-sn-glyceryl-L-cysteinyl-[prolipoprotein] + sn-glycerol 1-phosphate + H(+). Its pathway is protein modification; lipoprotein biosynthesis (diacylglyceryl transfer). Catalyzes the transfer of the diacylglyceryl group from phosphatidylglycerol to the sulfhydryl group of the N-terminal cysteine of a prolipoprotein, the first step in the formation of mature lipoproteins. The sequence is that of Phosphatidylglycerol--prolipoprotein diacylglyceryl transferase from Mycobacterium bovis (strain ATCC BAA-935 / AF2122/97).